The following is a 727-amino-acid chain: Tubulin polyglutamylase TTLL11 (727 aa).

A compositionally biased stretch (basic and acidic residues) spans 1-12 (MRRSSPEKKPEA). Residues 1–88 (MRRSSPEKKP…ARVVRRLPPA (88 aa)) form a disordered region. A compositionally biased stretch (low complexity) spans 17–34 (DAAAAAAATAAATESLPA). Basic and acidic residues-rich tracts occupy residues 49-63 (DPER…KDVG) and 72-81 (HAPEEGEARV). In terms of domain architecture, TTL spans 125–477 (PVTVDSSKAR…EVKVAVIRDT (353 aa)). ATP is bound by residues Lys-246, 252–253 (QG), 279–282 (QEYI), and 292–294 (KFD). Gln-252 lines the a protein pocket. Residue Arg-318 participates in L-glutamate binding. 340-341 (TN) lines the ATP pocket. L-glutamate is bound by residues Tyr-342, Ser-343, and Lys-362. Residues Asp-425, Glu-438, and Asn-440 each contribute to the Mg(2+) site. A c-MTBD region region spans residues 464–566 (LVDEEVKVAV…SICLKQVFPK (103 aa)). Lys-470 serves as a coordination point for L-glutamate. Disordered stretches follow at residues 530-551 (KSFT…EPNP) and 694-727 (RPLQ…LSQS).

The protein belongs to the tubulin--tyrosine ligase family. Mg(2+) serves as cofactor. As to expression, highly expressed in brain, kidney, liver, lung, muscle and testis. Expressed in heart, spleen and trachea. In the brain, expressed in ependymal cilia, cortex, corpus callosum and striatum.

The protein localises to the cytoplasm. The protein resides in the cytoskeleton. Its subcellular location is the cilium basal body. The catalysed reaction is L-glutamyl-[protein] + L-glutamate + ATP = gamma-L-glutamyl-L-glutamyl-[protein] + ADP + phosphate + H(+). It catalyses the reaction (L-glutamyl)(n)-gamma-L-glutamyl-L-glutamyl-[protein] + L-glutamate + ATP = (L-glutamyl)(n+1)-gamma-L-glutamyl-L-glutamyl-[protein] + ADP + phosphate + H(+). Polyglutamylase which modifies tubulin, generating polyglutamate side chains of variable lengths on the gamma-carboxyl group of specific glutamate residues within the C-terminal tail of tubulin. Preferentially mediates ATP-dependent polyglutamate long side-chain elongation over the initiation step of the polyglutamylation reaction. Preferentially modifies the alpha-tubulin tail over a beta-tail. Required for CCSAP localization to both spindle and cilia microtubules. Promotes tubulin polyglutamylation which stimulates spastin/SPAST-mediated microtubule severing, thereby regulating microtubule functions. The polypeptide is Tubulin polyglutamylase TTLL11 (Mus musculus (Mouse)).